Reading from the N-terminus, the 747-residue chain is MGASATNSVTHPAFTLNVRPDNIGIITIDVVGDKVNTLKAEFADQIATILQQAHALPKLQGLVIVSGKPDSFIAGADITMIAACRTAHDARVLAQKGQSILAQIAAFPVPVVAAIHGACLGGGLELALACHSRICSLDDKTVLGLPEVQLGLLPGSGGTQRLPRLVGVSKALDMILTGKQIRPRQALKMGLVDDVVPRDILLDVAIQRAKAGWLNRRALPWQERLLSGPLGKALLFRIVRKKTLAKTRGHYPAAERIIDVVRKGLDQGGPSGYEAEARAFGELAMSPQSAALRSLFFATTSLKKETGSAATARAIHRVGVLGGGLMGGGIANVTATRAGLPVRIKDINPQGINQALKYTWDALGKRVRSKRMRPTEQQRQMMLISGSTDYRGFERVDIVVEAVFEDLSLKQQMVADIERFGAAHTIFASNTSSLPISQIAALAQRPEQVIGLHYFSPVDKMPLVEVIPHEKTSEETIATTVALARKQGKTAIVVADRAGFYVNRILAPYINEAARCLLDGEPIESVDNALVDFGFPVGPMMLLDEVGIDVATKIMPILVEQLGPRFAAPPSFDVILKDGRKGRKNGRGFYLYSNPTKNSSPTKNGNSPAKRNSFKWRKNKVKPVDASIYTLLGVTPKAHLGAGVITQRCTMLMLNEAVRCLDESIIRNPRDGDIGAVFGIGFPPFLGGPFRYLDSLGADKVVQALRLLVQQYGERFEPCQRLVTMAEQQQQFYPVDANIDEVTDVAS.

An enoyl-CoA hydratase region spans residues 1–197 (MGASATNSVT…KMGLVDDVVP (197 aa)). The 3-hydroxyacyl-CoA dehydrogenase stretch occupies residues 313-747 (RAIHRVGVLG…NIDEVTDVAS (435 aa)). Positions 590–614 (YLYSNPTKNSSPTKNGNSPAKRNSF) are disordered. Polar residues predominate over residues 593–610 (SNPTKNSSPTKNGNSPAK).

It in the N-terminal section; belongs to the enoyl-CoA hydratase/isomerase family. This sequence in the central section; belongs to the 3-hydroxyacyl-CoA dehydrogenase family. As to quaternary structure, heterotetramer of two alpha chains (FadJ) and two beta chains (FadI).

The protein resides in the cytoplasm. It carries out the reaction a (3S)-3-hydroxyacyl-CoA = a (2E)-enoyl-CoA + H2O. The catalysed reaction is a 4-saturated-(3S)-3-hydroxyacyl-CoA = a (3E)-enoyl-CoA + H2O. It catalyses the reaction a (3S)-3-hydroxyacyl-CoA + NAD(+) = a 3-oxoacyl-CoA + NADH + H(+). The enzyme catalyses (3S)-3-hydroxybutanoyl-CoA = (3R)-3-hydroxybutanoyl-CoA. It participates in lipid metabolism; fatty acid beta-oxidation. Its function is as follows. Catalyzes the formation of a hydroxyacyl-CoA by addition of water on enoyl-CoA. Also exhibits 3-hydroxyacyl-CoA epimerase and 3-hydroxyacyl-CoA dehydrogenase activities. This Yersinia pseudotuberculosis serotype O:1b (strain IP 31758) protein is Fatty acid oxidation complex subunit alpha.